Reading from the N-terminus, the 307-residue chain is Homoserine O-acetyltransferase (307 aa).

The active-site Acyl-thioester intermediate is cysteine 142. Positions 163 and 192 each coordinate substrate. Catalysis depends on histidine 235, which acts as the Proton acceptor. Residue glutamate 237 is part of the active site. Residue arginine 249 coordinates substrate.

Belongs to the MetA family.

Its subcellular location is the cytoplasm. The catalysed reaction is L-homoserine + acetyl-CoA = O-acetyl-L-homoserine + CoA. Its pathway is amino-acid biosynthesis; L-methionine biosynthesis via de novo pathway; O-acetyl-L-homoserine from L-homoserine: step 1/1. In terms of biological role, transfers an acetyl group from acetyl-CoA to L-homoserine, forming acetyl-L-homoserine. This chain is Homoserine O-acetyltransferase, found in Desulfitobacterium hafniense (strain Y51).